Consider the following 689-residue polypeptide: UvrABC system protein C (689 aa).

Residues 1 to 19 (MTSDSSDTAKQIGSGQPSG) are compositionally biased toward polar residues. The tract at residues 1-59 (MTSDSSDTAKQIGSGQPSGSPADMRRRDGVAPEQEVDPASLETDEDDEARLPDLPDEPV) is disordered. The span at 42 to 59 (ETDEDDEARLPDLPDEPV) shows a compositional bias: acidic residues. The 79-residue stretch at 83–161 (TSPGVYRMMN…IKQLRPRFNV (79 aa)) folds into the GIY-YIG domain. The UVR domain occupies 271–306 (RAVKEDLARAMEQAAADLAFERAALYRDRLAALSAI).

The protein belongs to the UvrC family. As to quaternary structure, interacts with UvrB in an incision complex.

It localises to the cytoplasm. Functionally, the UvrABC repair system catalyzes the recognition and processing of DNA lesions. UvrC both incises the 5' and 3' sides of the lesion. The N-terminal half is responsible for the 3' incision and the C-terminal half is responsible for the 5' incision. The protein is UvrABC system protein C of Nitrobacter winogradskyi (strain ATCC 25391 / DSM 10237 / CIP 104748 / NCIMB 11846 / Nb-255).